Consider the following 388-residue polypeptide: Succinate--CoA ligase [ADP-forming] subunit beta (388 aa).

The 236-residue stretch at 9–244 (KKLFAEYGLP…PSQDDPREAH (236 aa)) folds into the ATP-grasp domain. ATP-binding positions include Lys46, 53 to 55 (GRG), Glu99, Thr102, and Glu107. Residues Asn199 and Asp213 each coordinate Mg(2+). Residues Asn264 and 321-323 (GIV) each bind substrate.

It belongs to the succinate/malate CoA ligase beta subunit family. Heterotetramer of two alpha and two beta subunits. Requires Mg(2+) as cofactor.

It carries out the reaction succinate + ATP + CoA = succinyl-CoA + ADP + phosphate. The enzyme catalyses GTP + succinate + CoA = succinyl-CoA + GDP + phosphate. It functions in the pathway carbohydrate metabolism; tricarboxylic acid cycle; succinate from succinyl-CoA (ligase route): step 1/1. In terms of biological role, succinyl-CoA synthetase functions in the citric acid cycle (TCA), coupling the hydrolysis of succinyl-CoA to the synthesis of either ATP or GTP and thus represents the only step of substrate-level phosphorylation in the TCA. The beta subunit provides nucleotide specificity of the enzyme and binds the substrate succinate, while the binding sites for coenzyme A and phosphate are found in the alpha subunit. The polypeptide is Succinate--CoA ligase [ADP-forming] subunit beta (Aeromonas salmonicida (strain A449)).